Reading from the N-terminus, the 555-residue chain is Spermine oxidase (555 aa).

FAD contacts are provided by residues A35, E55, R63, 79–80, and V261; that span reads TW. The tract at residues 271–307 is disordered; the sequence is AHPRGPEIEPRGEGDHNHDTGEGGQSGENPQQGRWDE. Residues 274–291 are compositionally biased toward basic and acidic residues; that stretch reads RGPEIEPRGEGDHNHDTG. Residues E519 and 528 to 529 contribute to the FAD site; that span reads TT.

Belongs to the flavin monoamine oxidase family. The cofactor is FAD. In terms of tissue distribution, widely expressed. Isoform 1 and isoform 2 are expressed at higher level in brain and skeletal muscle. Isoform 7 is found in brain and spleen, isoform 10 is widely expressed but found at lower level in heart, kidney, liver and lung.

The protein localises to the cytoplasm. It is found in the nucleus. The enzyme catalyses spermine + O2 + H2O = 3-aminopropanal + spermidine + H2O2. The protein operates within amine and polyamine degradation; spermine degradation. Functionally, flavoenzyme which catalyzes the oxidation of spermine to spermidine. Can also use N(1)-acetylspermine and spermidine as substrates, with different affinity depending on the isoform (isozyme) and on the experimental conditions. Plays an important role in the regulation of polyamine intracellular concentration and has the potential to act as a determinant of cellular sensitivity to the antitumor polyamine analogs. May contribute to beta-alanine production via aldehyde dehydrogenase conversion of 3-amino-propanal. This Mus musculus (Mouse) protein is Spermine oxidase (Smox).